Consider the following 445-residue polypeptide: UPF0210 protein llmg_1581 (445 aa).

Belongs to the UPF0210 family. In terms of assembly, homodimer.

In Lactococcus lactis subsp. cremoris (strain MG1363), this protein is UPF0210 protein llmg_1581.